The primary structure comprises 622 residues: UvrABC system protein C (622 aa).

The GIY-YIG domain maps to 13–92; sequence EKPGVYLMKN…IKKYRPKYNI (80 aa). The region spanning 204–239 is the UVR domain; that stretch reads KDILDKLKNQMEEASNSLQFEKAASLRDKIFAVKKI.

The protein belongs to the UvrC family. As to quaternary structure, interacts with UvrB in an incision complex.

The protein resides in the cytoplasm. The UvrABC repair system catalyzes the recognition and processing of DNA lesions. UvrC both incises the 5' and 3' sides of the lesion. The N-terminal half is responsible for the 3' incision and the C-terminal half is responsible for the 5' incision. The chain is UvrABC system protein C from Clostridium tetani (strain Massachusetts / E88).